We begin with the raw amino-acid sequence, 221 residues long: UPF0502 protein PA14_19450 (221 aa).

The protein belongs to the UPF0502 family.

The chain is UPF0502 protein PA14_19450 from Pseudomonas aeruginosa (strain UCBPP-PA14).